The primary structure comprises 246 residues: Ribosome maturation factor RimM (246 aa).

Basic and acidic residues predominate over residues 1-15; sequence MKRKQESKGAGEKRQ. The interval 1 to 63 is disordered; it reads MKRKQESKGA…NPQFTTPNPD (63 aa). Residues 45 to 54 are compositionally biased toward pro residues; sequence VPSPQSPIPN. The 82-residue stretch at 158-239 folds into the PRC barrel domain; that stretch reads GEDEYHVVDL…RIEITPPPGL (82 aa).

Belongs to the RimM family. As to quaternary structure, binds ribosomal protein uS19.

The protein localises to the cytoplasm. Functionally, an accessory protein needed during the final step in the assembly of 30S ribosomal subunit, possibly for assembly of the head region. Essential for efficient processing of 16S rRNA. May be needed both before and after RbfA during the maturation of 16S rRNA. It has affinity for free ribosomal 30S subunits but not for 70S ribosomes. The protein is Ribosome maturation factor RimM of Nostoc sp. (strain PCC 7120 / SAG 25.82 / UTEX 2576).